The primary structure comprises 140 residues: Mialostatin (140 aa).

The first 18 residues, 1-18, serve as a signal peptide directing secretion; that stretch reads MAFFKSAVFLVCVVLAAA. Intrachain disulfides connect Cys-90–Cys-103 and Cys-114–Cys-134.

The protein belongs to the cystatin family. Expressed in midgut (at protein level).

The protein localises to the secreted. Inhibitor of cysteine proteinases. Inhibits several endogenous midgut digestive cysteine proteases, such as cathepsin L1, L3, B and C, but not aspartic protease cathepsin D1 and cysteine protease legumain. Inhibits proteolysis of blood proteins catalyzed by tick gut cysteine cathepsins. Inhibits host cathepsin B (CSTB), C (CTSC), H (CTSH), K (CTSK), L (CTSL) and S (CTSS). The sequence is that of Mialostatin from Ixodes ricinus (Common tick).